A 424-amino-acid polypeptide reads, in one-letter code: Serine--tRNA ligase (424 aa).

231–233 is a binding site for L-serine; the sequence is TAE. 262–264 serves as a coordination point for ATP; that stretch reads RAE. E285 lines the L-serine pocket. ATP is bound at residue 349 to 352; the sequence is EISS. Position 385 (S385) interacts with L-serine.

It belongs to the class-II aminoacyl-tRNA synthetase family. Type-1 seryl-tRNA synthetase subfamily. As to quaternary structure, homodimer. The tRNA molecule binds across the dimer.

Its subcellular location is the cytoplasm. It carries out the reaction tRNA(Ser) + L-serine + ATP = L-seryl-tRNA(Ser) + AMP + diphosphate + H(+). The enzyme catalyses tRNA(Sec) + L-serine + ATP = L-seryl-tRNA(Sec) + AMP + diphosphate + H(+). Its pathway is aminoacyl-tRNA biosynthesis; selenocysteinyl-tRNA(Sec) biosynthesis; L-seryl-tRNA(Sec) from L-serine and tRNA(Sec): step 1/1. Its function is as follows. Catalyzes the attachment of serine to tRNA(Ser). Is also able to aminoacylate tRNA(Sec) with serine, to form the misacylated tRNA L-seryl-tRNA(Sec), which will be further converted into selenocysteinyl-tRNA(Sec). The chain is Serine--tRNA ligase from Geobacillus kaustophilus (strain HTA426).